The following is a 104-amino-acid chain: Large ribosomal subunit protein uL24 (104 aa).

Belongs to the universal ribosomal protein uL24 family. As to quaternary structure, part of the 50S ribosomal subunit.

Its function is as follows. One of two assembly initiator proteins, it binds directly to the 5'-end of the 23S rRNA, where it nucleates assembly of the 50S subunit. Functionally, one of the proteins that surrounds the polypeptide exit tunnel on the outside of the subunit. This Maricaulis maris (strain MCS10) (Caulobacter maris) protein is Large ribosomal subunit protein uL24.